Consider the following 354-residue polypeptide: MQRLRESPPPKTRCLGEASDIIPAADRFLRCANLILPWLNPRELAVVAQTCKTLSLISKSLTIHRSLDAARSLENISIPFHNSIDSQRYAYFIYTPFQIPASSPPPPRQWWGAAANECGSESRPCFDSVSESGRFGVSLVDESGCECERCEEGYCKCLAFAGMEEIANECGSGCGCGSDCSNRVTQKGVSVSLKIVRDEKKGWCLYADQLIKQGQFICEYAGELLTTDEARRRQNIYDKLRSTQSFASALLVVREHLPSGQACLRINIDATRIGNVARFINHSCDGGNLSTVLLRSSGALLPRLCFFAAKDIIAEEELSFSYGDVSVAGENRDDKLNCSCGSSCCLGTLPCENT.

Residues 143–188 (SGCECERCEEGYCKCLAFAGMEEIANECGSGCGCGSDCSNRVTQKG) enclose the Pre-SET domain. Positions 145, 147, 150, 155, 157, 170, 174, 176, and 180 each coordinate Zn(2+). Positions 191-323 (VSLKIVRDEK…AEEELSFSYG (133 aa)) constitute an SET domain. S-adenosyl-L-methionine-binding positions include 201–203 (KGW) and 281–282 (NH). A Zn(2+)-binding site is contributed by C284. Y322 provides a ligand contact to S-adenosyl-L-methionine. A Post-SET domain is found at 334–350 (DKLNCSCGSSCCLGTLP). 3 residues coordinate Zn(2+): C338, C340, and C345.

The protein belongs to the class V-like SAM-binding methyltransferase superfamily.

It is found in the nucleus. The protein localises to the chromosome. It catalyses the reaction L-lysyl-[histone] + S-adenosyl-L-methionine = N(6)-methyl-L-lysyl-[histone] + S-adenosyl-L-homocysteine + H(+). In terms of biological role, histone methyltransferase. The polypeptide is Histone-lysine N-methyltransferase SUVR3 (SUVR3) (Arabidopsis thaliana (Mouse-ear cress)).